The following is a 105-amino-acid chain: Large ribosomal subunit protein uL24 (105 aa).

Belongs to the universal ribosomal protein uL24 family. Part of the 50S ribosomal subunit.

Its function is as follows. One of two assembly initiator proteins, it binds directly to the 5'-end of the 23S rRNA, where it nucleates assembly of the 50S subunit. In terms of biological role, one of the proteins that surrounds the polypeptide exit tunnel on the outside of the subunit. In Mycolicibacterium smegmatis (strain ATCC 700084 / mc(2)155) (Mycobacterium smegmatis), this protein is Large ribosomal subunit protein uL24.